Consider the following 550-residue polypeptide: Homeobox and leucine zipper protein Homez (550 aa).

Residues 1–10 show a composition bias toward pro residues; that stretch reads MVRGWEPPPG. Residues 1 to 36 form a disordered region; sequence MVRGWEPPPGLDCAISEGHKSEGTMPPNKEASGLSS. The segment at residues 55–114 is a DNA-binding region (homeobox 1); it reads WTQAAQTSELDSNEHLLKTFSYFPYPSLADIALLCLRYGLQMEKVKTWFMAQRLRCGISW. Residues 168 to 199 form a disordered region; that stretch reads GPPTLSKPTQTKGLKVEPEEPSQMPPLPQSHQ. Glycyl lysine isopeptide (Lys-Gly) (interchain with G-Cter in SUMO2) cross-links involve residues Lys-182, Lys-200, and Lys-202. The segment at 223 to 265 is disordered; sequence LQSSGLSKEQAGRGPNQSHGIGTASWNHSTTVPQPQARDKPPP. Over residues 237–256 the composition is skewed to polar residues; that stretch reads PNQSHGIGTASWNHSTTVPQ. Residue Ser-351 is modified to Phosphoserine. 2 consecutive DNA-binding regions (homeobox) follow at residues 355–415 and 451–510; these read QRQR…KHGQ and TPPL…AEVV. A Nuclear localization signal motif is present at residues 358–363; it reads RKTKRK. Disordered stretches follow at residues 424 to 465 and 512 to 550; these read VPGA…DIQP and CLDE…IIQD. Phosphothreonine is present on Thr-451. Positions 452 to 463 are enriched in pro residues; it reads PPLPIPPPPPDI. A compositionally biased stretch (acidic residues) spans 513 to 550; the sequence is LDEEEEEEEEELPEDDEEEEEEEEEDDDDDDDDVIIQD.

In terms of assembly, homodimer or heterodimer (Potential). Interacts with HOXC8. In terms of tissue distribution, ubiquitous. Strongly expressed in adult testis and kidney as well as fetal lung and kidney.

The protein resides in the nucleus. Its function is as follows. May function as a transcriptional regulator. This chain is Homeobox and leucine zipper protein Homez (HOMEZ), found in Homo sapiens (Human).